The following is a 151-amino-acid chain: Putative pre-16S rRNA nuclease (151 aa).

Belongs to the YqgF nuclease family.

It is found in the cytoplasm. Could be a nuclease involved in processing of the 5'-end of pre-16S rRNA. The sequence is that of Putative pre-16S rRNA nuclease from Nitrosospira multiformis (strain ATCC 25196 / NCIMB 11849 / C 71).